A 186-amino-acid chain; its full sequence is Elongation factor P (186 aa).

Belongs to the elongation factor P family.

The protein localises to the cytoplasm. It participates in protein biosynthesis; polypeptide chain elongation. Involved in peptide bond synthesis. Stimulates efficient translation and peptide-bond synthesis on native or reconstituted 70S ribosomes in vitro. Probably functions indirectly by altering the affinity of the ribosome for aminoacyl-tRNA, thus increasing their reactivity as acceptors for peptidyl transferase. This chain is Elongation factor P, found in Crocosphaera subtropica (strain ATCC 51142 / BH68) (Cyanothece sp. (strain ATCC 51142)).